The following is a 334-amino-acid chain: Aspartate carbamoyltransferase catalytic subunit (334 aa).

Positions 71 and 72 each coordinate carbamoyl phosphate. K99 contacts L-aspartate. Carbamoyl phosphate is bound by residues R121, H151, and Q154. R184 and R239 together coordinate L-aspartate. Residues G280 and P281 each coordinate carbamoyl phosphate.

Belongs to the aspartate/ornithine carbamoyltransferase superfamily. ATCase family. As to quaternary structure, heterododecamer (2C3:3R2) of six catalytic PyrB chains organized as two trimers (C3), and six regulatory PyrI chains organized as three dimers (R2).

It catalyses the reaction carbamoyl phosphate + L-aspartate = N-carbamoyl-L-aspartate + phosphate + H(+). It functions in the pathway pyrimidine metabolism; UMP biosynthesis via de novo pathway; (S)-dihydroorotate from bicarbonate: step 2/3. Catalyzes the condensation of carbamoyl phosphate and aspartate to form carbamoyl aspartate and inorganic phosphate, the committed step in the de novo pyrimidine nucleotide biosynthesis pathway. The protein is Aspartate carbamoyltransferase catalytic subunit of Pseudomonas putida (strain ATCC 47054 / DSM 6125 / CFBP 8728 / NCIMB 11950 / KT2440).